The chain runs to 447 residues: Trigger factor (447 aa).

A PPIase FKBP-type domain is found at 164-249 (GDLVVIDFIG…VKEVKQAVVP (86 aa)).

Belongs to the FKBP-type PPIase family. Tig subfamily.

It is found in the cytoplasm. It carries out the reaction [protein]-peptidylproline (omega=180) = [protein]-peptidylproline (omega=0). Involved in protein export. Acts as a chaperone by maintaining the newly synthesized protein in an open conformation. Functions as a peptidyl-prolyl cis-trans isomerase. In Rhodospirillum rubrum (strain ATCC 11170 / ATH 1.1.1 / DSM 467 / LMG 4362 / NCIMB 8255 / S1), this protein is Trigger factor.